A 238-amino-acid chain; its full sequence is Large ribosomal subunit protein uL1 (238 aa).

It belongs to the universal ribosomal protein uL1 family. In terms of assembly, part of the 50S ribosomal subunit.

Functionally, binds directly to 23S rRNA. The L1 stalk is quite mobile in the ribosome, and is involved in E site tRNA release. Its function is as follows. Protein L1 is also a translational repressor protein, it controls the translation of the L11 operon by binding to its mRNA. This chain is Large ribosomal subunit protein uL1, found in Frankia alni (strain DSM 45986 / CECT 9034 / ACN14a).